A 188-amino-acid polypeptide reads, in one-letter code: Elongation factor P (188 aa).

It belongs to the elongation factor P family.

It is found in the cytoplasm. The protein operates within protein biosynthesis; polypeptide chain elongation. Involved in peptide bond synthesis. Stimulates efficient translation and peptide-bond synthesis on native or reconstituted 70S ribosomes in vitro. Probably functions indirectly by altering the affinity of the ribosome for aminoacyl-tRNA, thus increasing their reactivity as acceptors for peptidyl transferase. In Leptospira interrogans serogroup Icterohaemorrhagiae serovar copenhageni (strain Fiocruz L1-130), this protein is Elongation factor P.